A 392-amino-acid polypeptide reads, in one-letter code: Tryptophan synthase beta chain (392 aa).

K84 bears the N6-(pyridoxal phosphate)lysine mark.

It belongs to the TrpB family. In terms of assembly, tetramer of two alpha and two beta chains. The cofactor is pyridoxal 5'-phosphate.

The catalysed reaction is (1S,2R)-1-C-(indol-3-yl)glycerol 3-phosphate + L-serine = D-glyceraldehyde 3-phosphate + L-tryptophan + H2O. The protein operates within amino-acid biosynthesis; L-tryptophan biosynthesis; L-tryptophan from chorismate: step 5/5. Functionally, the beta subunit is responsible for the synthesis of L-tryptophan from indole and L-serine. The sequence is that of Tryptophan synthase beta chain from Campylobacter jejuni subsp. jejuni serotype O:6 (strain 81116 / NCTC 11828).